The following is a 338-amino-acid chain: Clathrin light chain 1 (338 aa).

Residues methionine 1 to arginine 111 are disordered. Polar residues-rich tracts occupy residues serine 29–asparagine 47 and serine 61–serine 73. The span at asparagine 102 to arginine 111 shows a compositional bias: basic and acidic residues. Positions asparagine 102–arginine 163 are involved in binding clathrin heavy chain. Residues leucine 122–aspartate 142 are a coiled coil. Residues isoleucine 192 to glutamate 338 form a disordered region. Residues proline 197–proline 212 are compositionally biased toward basic and acidic residues. Residues asparagine 241–alanine 253 show a composition bias toward pro residues. The span at lysine 254–proline 304 shows a compositional bias: basic and acidic residues.

It belongs to the clathrin light chain family. In terms of assembly, clathrin coats are formed from molecules containing 3 heavy chains and 3 light chains.

The protein localises to the cytoplasmic vesicle membrane. It is found in the membrane. It localises to the coated pit. Functionally, clathrin is the major protein of the polyhedral coat of coated pits and vesicles. In Arabidopsis thaliana (Mouse-ear cress), this protein is Clathrin light chain 1.